A 230-amino-acid chain; its full sequence is MAKHGKRYLEAAKKVDSTKFYSVDEAMKLAKETSYANFDATIEVAYNLNVDPKQADQQIRGALVLPNGTGKSKKVVVFAEGPQADQAKEAGADEVGSDDLVEKVQNGYLDFDVVIATPMMMAKVGRLGRILGPKGLMPNPKTGTVTMDVAKAVENQKAGQVEYRVDKQGLIHAPIGKASFDAEKLAQNFDALRDVILRARPASTKGQYVKSVAVSATFGPGIHLDPLNLD.

Belongs to the universal ribosomal protein uL1 family. In terms of assembly, part of the 50S ribosomal subunit.

Binds directly to 23S rRNA. The L1 stalk is quite mobile in the ribosome, and is involved in E site tRNA release. Its function is as follows. Protein L1 is also a translational repressor protein, it controls the translation of the L11 operon by binding to its mRNA. The sequence is that of Large ribosomal subunit protein uL1 from Lactobacillus johnsonii (strain CNCM I-12250 / La1 / NCC 533).